Reading from the N-terminus, the 307-residue chain is Transcription factor MYB78 (307 aa).

2 consecutive HTH myb-type domains span residues 23–79 and 80–130; these read EMDV…RPDV and RRGN…QKHA. 2 consecutive DNA-binding regions (H-T-H motif) follow at residues 51-75 and 103-126; these read WNSL…LNYL and WSKI…RTRV.

It localises to the nucleus. The polypeptide is Transcription factor MYB78 (Arabidopsis thaliana (Mouse-ear cress)).